Reading from the N-terminus, the 450-residue chain is Glutamate-1-semialdehyde 2,1-aminomutase (450 aa).

Lys262 carries the N6-(pyridoxal phosphate)lysine modification.

The protein belongs to the class-III pyridoxal-phosphate-dependent aminotransferase family. HemL subfamily. Homodimer. It depends on pyridoxal 5'-phosphate as a cofactor.

The protein resides in the cytoplasm. The catalysed reaction is (S)-4-amino-5-oxopentanoate = 5-aminolevulinate. Its pathway is porphyrin-containing compound metabolism; protoporphyrin-IX biosynthesis; 5-aminolevulinate from L-glutamyl-tRNA(Glu): step 2/2. This Campylobacter hominis (strain ATCC BAA-381 / DSM 21671 / CCUG 45161 / LMG 19568 / NCTC 13146 / CH001A) protein is Glutamate-1-semialdehyde 2,1-aminomutase.